A 270-amino-acid polypeptide reads, in one-letter code: (+)-cis,cis-nepetalactol synthase NEPS3 (270 aa).

Residues Gly-21–Gly-27, Asp-46–Gln-48, Asp-70–Val-71, Asn-97, Tyr-165–Lys-169, and Val-198–Leu-202 each bind NAD(+).

It belongs to the short-chain dehydrogenases/reductases (SDR) family. As to quaternary structure, forms homotetramers.

The enzyme catalyses (S)-8-oxocitronellyl enol = cis-cis-nepetalactol. In terms of biological role, functions as a non-oxidoreductive cyclase to promote the formation of cis-cis-nepetalactol. Cis-cis-nepetalactol is then oxidized by NEPS1 into cis-cis-nepetalactone, which belongs to a family of metabolites that are both insect-repellent and have euphoric effect in cats. Binds NAD(+) as classical short-chain dehydrogenase/reductase (SDR), but does not utilize it for its redox-neutral cyclase activity. This is (+)-cis,cis-nepetalactol synthase NEPS3 from Nepeta racemosa (Catmint).